We begin with the raw amino-acid sequence, 250 residues long: tRNA (guanine-N(1)-)-methyltransferase (250 aa).

Residues Gly-113 and 133–138 (IGDYVL) each bind S-adenosyl-L-methionine.

Belongs to the RNA methyltransferase TrmD family. In terms of assembly, homodimer.

It localises to the cytoplasm. It carries out the reaction guanosine(37) in tRNA + S-adenosyl-L-methionine = N(1)-methylguanosine(37) in tRNA + S-adenosyl-L-homocysteine + H(+). Functionally, specifically methylates guanosine-37 in various tRNAs. This is tRNA (guanine-N(1)-)-methyltransferase from Photorhabdus laumondii subsp. laumondii (strain DSM 15139 / CIP 105565 / TT01) (Photorhabdus luminescens subsp. laumondii).